Reading from the N-terminus, the 154-residue chain is AP-1 complex subunit sigma-3 (154 aa).

Belongs to the adaptor complexes small subunit family. In terms of assembly, adaptor protein complex 1 (AP-1) is a heterotetramer composed of two large adaptins (gamma-type subunit AP1G1 and beta-type subunit AP1B1), a medium adaptin (mu-type subunit AP1M1 or AP1M2) and a small adaptin (sigma-type subunit AP1S1 or AP1S2 or AP1S3). As to expression, widely expressed.

It is found in the golgi apparatus. It localises to the cytoplasmic vesicle membrane. The protein localises to the membrane. Its subcellular location is the clathrin-coated pit. Subunit of clathrin-associated adaptor protein complex 1 that plays a role in protein sorting in the late-Golgi/trans-Golgi network (TGN) and/or endosomes. The AP complexes mediate both the recruitment of clathrin to membranes and the recognition of sorting signals within the cytosolic tails of transmembrane cargo molecules. Involved in TLR3 trafficking. The protein is AP-1 complex subunit sigma-3 (AP1S3) of Homo sapiens (Human).